We begin with the raw amino-acid sequence, 172 residues long: WW domain binding protein VOPP1 (172 aa).

The N-terminal stretch at 1 to 22 is a signal peptide; sequence MARPLGRVAALLLGLLMECTEA. Over 23 to 60 the chain is Extracellular; that stretch reads KKHCWYFEGLYPTYYICRSYEDCCGSRCCVRALSIQRL. Residues 61–81 traverse the membrane as a helical segment; sequence WYFWFLLMMGVLFCCGAGFFI. Topologically, residues 82-172 are cytoplasmic; the sequence is RRRMYPPPLI…PPYEQVVKDK (91 aa). The disordered stretch occupies residues 139–172; the sequence is QVQPNSPHGGTTYPPPPSYCNTPPPPYEQVVKDK. Residues 151 to 165 show a composition bias toward pro residues; sequence YPPPPSYCNTPPPPY.

It belongs to the VOPP1/ECOP family. As to quaternary structure, interacts with WWOX (via WW domain).

The protein localises to the cytoplasmic vesicle membrane. The protein resides in the late endosome membrane. Its subcellular location is the lysosome membrane. Functionally, increases the transcriptional activity of NFKB1 by facilitating its nuclear translocation, DNA-binding and associated apoptotic response, when overexpressed. May sequester WWOX in lysosomal vesicles and thereby regulate WWOX role as tumor suppressor. The protein is WW domain binding protein VOPP1 of Rattus norvegicus (Rat).